The sequence spans 768 residues: Photosystem I P700 chlorophyll a apoprotein A1 (768 aa).

8 helical membrane-spanning segments follow: residues Val-76–Ala-99, Leu-162–His-185, Leu-201–Ala-225, Ile-310–Tyr-328, Trp-369–Tyr-392, Leu-408–Ile-434, Ala-456–His-478, and Phe-559–Leu-577. Positions 601 and 610 each coordinate [4Fe-4S] cluster. 2 consecutive transmembrane segments (helical) span residues His-617–Trp-638 and Ile-682–Phe-704. Residue His-693 coordinates divinylchlorophyll a'. Met-701 and Tyr-709 together coordinate divinyl chlorophyll a. Trp-710 contributes to the phylloquinone binding site. The helical transmembrane segment at Ala-742 to Ala-762 threads the bilayer.

Belongs to the PsaA/PsaB family. As to quaternary structure, the PsaA/B heterodimer binds the P700 divinyl chlorophyll special pair and subsequent electron acceptors. PSI consists of a core antenna complex that captures photons, and an electron transfer chain that converts photonic excitation into a charge separation. The cyanobacterial PSI reaction center is composed of one copy each of PsaA,B,C,D,E,F,I,J,K,L,M and X, and forms trimeric complexes. PSI electron transfer chain: 5 divinyl chlorophyll a, 1 divinyl chlorophyll a', 2 phylloquinones and 3 4Fe-4S clusters. PSI core antenna: 90 divinyl chlorophyll a, 22 carotenoids, 3 phospholipids and 1 galactolipid. P700 is a divinyl chlorophyll a/divinyl chlorophyll a' dimer, A0 is one or more divinyl chlorophyll a, A1 is one or both phylloquinones and FX is a shared 4Fe-4S iron-sulfur center. is required as a cofactor.

It is found in the cellular thylakoid membrane. It carries out the reaction reduced [plastocyanin] + hnu + oxidized [2Fe-2S]-[ferredoxin] = oxidized [plastocyanin] + reduced [2Fe-2S]-[ferredoxin]. In terms of biological role, psaA and PsaB bind P700, the primary electron donor of photosystem I (PSI), as well as the electron acceptors A0, A1 and FX. PSI is a plastocyanin/cytochrome c6-ferredoxin oxidoreductase, converting photonic excitation into a charge separation, which transfers an electron from the donor P700 chlorophyll pair to the spectroscopically characterized acceptors A0, A1, FX, FA and FB in turn. Oxidized P700 is reduced on the lumenal side of the thylakoid membrane by plastocyanin or cytochrome c6. This Prochlorococcus marinus (strain NATL1A) protein is Photosystem I P700 chlorophyll a apoprotein A1.